A 530-amino-acid chain; its full sequence is Arginine--tRNA ligase (530 aa).

A 'HIGH' region motif is present at residues 113 to 123; the sequence is ANPTGPLHIGH.

The protein belongs to the class-I aminoacyl-tRNA synthetase family. In terms of assembly, monomer.

The protein resides in the cytoplasm. The catalysed reaction is tRNA(Arg) + L-arginine + ATP = L-arginyl-tRNA(Arg) + AMP + diphosphate. The chain is Arginine--tRNA ligase from Campylobacter jejuni (strain RM1221).